The chain runs to 617 residues: Probable LRR receptor-like serine/threonine-protein kinase RKF3 (617 aa).

The signal sequence occupies residues 1–20 (MLFLRRIAVVFFVFTSFSAA). Over 21 to 212 (QNSTCPLDFS…PTSSGANKVK (192 aa)) the chain is Extracellular. Residues Asn22, Asn124, Asn135, and Asn165 are each glycosylated (N-linked (GlcNAc...) asparagine). The chain crosses the membrane as a helical span at residues 213-233 (VLVSSFSVLLVASVLVITAWF). The Cytoplasmic portion of the chain corresponds to 234–617 (WYCRRKKSKL…DGPSGNTNTT (384 aa)). The region spanning 283–563 (FSRHNIIGRG…VKMLESNEFT (281 aa)) is the Protein kinase domain. ATP-binding positions include 289-297 (IGRGGYGNV) and Lys311. The active-site Proton acceptor is the Asp412. A disordered region spans residues 585–617 (VSSSSGSGKLTSPTGYQAFSFGGDGPSGNTNTT).

Belongs to the protein kinase superfamily. Ser/Thr protein kinase family. Expressed in the whole plant at low levels.

The protein localises to the cell membrane. The enzyme catalyses L-seryl-[protein] + ATP = O-phospho-L-seryl-[protein] + ADP + H(+). It catalyses the reaction L-threonyl-[protein] + ATP = O-phospho-L-threonyl-[protein] + ADP + H(+). The sequence is that of Probable LRR receptor-like serine/threonine-protein kinase RKF3 (RKF3) from Arabidopsis thaliana (Mouse-ear cress).